The chain runs to 428 residues: Histidinol dehydrogenase (428 aa).

3 residues coordinate NAD(+): Tyr127, Gln189, and Asn212. Positions 235, 257, and 260 each coordinate substrate. The Zn(2+) site is built by Gln257 and His260. Active-site proton acceptor residues include Glu325 and His326. Substrate-binding residues include His326, Asp359, Glu413, and His418. Asp359 contacts Zn(2+). Position 418 (His418) interacts with Zn(2+).

It belongs to the histidinol dehydrogenase family. Zn(2+) serves as cofactor.

The enzyme catalyses L-histidinol + 2 NAD(+) + H2O = L-histidine + 2 NADH + 3 H(+). It functions in the pathway amino-acid biosynthesis; L-histidine biosynthesis; L-histidine from 5-phospho-alpha-D-ribose 1-diphosphate: step 9/9. Catalyzes the sequential NAD-dependent oxidations of L-histidinol to L-histidinaldehyde and then to L-histidine. The chain is Histidinol dehydrogenase from Prochlorococcus marinus subsp. pastoris (strain CCMP1986 / NIES-2087 / MED4).